Consider the following 460-residue polypeptide: Heme sensor protein HssS (460 aa).

Helical transmembrane passes span 11-31 (IYTI…TNII) and 164-184 (IFLA…VISS). An HAMP domain is found at 186–238 (YAIIKPIQQLKRATERLMHGNFDEVIHVTRKDEFGTLQYRFDKMRLSLKQLDD). The region spanning 246-456 (NVSHEIKTPL…TFTITFKKVP (211 aa)) is the Histidine kinase domain. H249 carries the phosphohistidine; by autocatalysis modification.

Post-translationally, autophosphorylated.

It is found in the cell membrane. It catalyses the reaction ATP + protein L-histidine = ADP + protein N-phospho-L-histidine.. Member of the two-component regulatory system HssS/HssR involved in intracellular heme homeostasis and tempering of staphylococcal virulence. HssS functions as a heme sensor histidine kinase which is autophosphorylated at a histidine residue and transfers its phosphate group to an aspartate residue of HssR. HssR/HssS activates the expression of hrtAB, an efflux pump, in response to extracellular heme, hemin, hemoglobin or blood. In Staphylococcus saprophyticus subsp. saprophyticus (strain ATCC 15305 / DSM 20229 / NCIMB 8711 / NCTC 7292 / S-41), this protein is Heme sensor protein HssS (hssS).